A 197-amino-acid polypeptide reads, in one-letter code: GCN5-related N-acetyltransferase 1, chloroplastic (197 aa).

The transit peptide at 1-37 (MFLGGTISTPPASLRLRSTLNPQNAVTQSSSQATFPA) directs the protein to the chloroplast. Over residues 23–34 (QNAVTQSSSQAT) the composition is skewed to polar residues. The disordered stretch occupies residues 23 to 46 (QNAVTQSSSQATFPAAMQRKPPSY). The N-acetyltransferase domain maps to 58–195 (FLLRRTTEGL…GMVFIRKQRN (138 aa)). Residues 129 to 131 (VVV), 137 to 142 (SCGLGK), 165 to 167 (EPR), and Tyr-172 contribute to the acetyl-CoA site. The active-site Proton donor is Tyr-172.

The protein belongs to the acetyltransferase family. GNAT subfamily. Oligomer. Post-translationally, autoacetylated. Expressed in green tissues. Accumulates mainly in flowers and young leaves, and, to a lower extent, in stems and mature leaves, but barely in roots.

Its subcellular location is the plastid. The protein resides in the chloroplast. It carries out the reaction an N-terminal L-alpha-aminoacyl-[protein] + acetyl-CoA = N-terminal N(alpha)-acetyl-L-alpha-aminoacyl-[protein] + CoA + H(+). It catalyses the reaction L-lysyl-[protein] + acetyl-CoA = N(6)-acetyl-L-lysyl-[protein] + CoA + H(+). The enzyme catalyses 5-methoxytryptamine + acetyl-CoA = melatonin + CoA + H(+). The catalysed reaction is serotonin + acetyl-CoA = N-acetylserotonin + CoA + H(+). With respect to regulation, inhibited by 5-methoxytryptamine in vitro. Functionally, protein acetyltransferase with dual specificity triggering both N-alpha-acetylation (NTA) and epsilon-lysine acetylation (KA), possibly with a low efficiency or toward specific plastid substrates. Involved in melatonin biosynthesis by catalyzing the formation of N-acetylserotonin (NAS) from serotonin and of melatonin (N-acetyl-5-methoxytryptamine) from 5-methoxytryptamine (5-MT). The sequence is that of GCN5-related N-acetyltransferase 1, chloroplastic from Arabidopsis thaliana (Mouse-ear cress).